We begin with the raw amino-acid sequence, 341 residues long: L-threonine 3-dehydrogenase (341 aa).

Cys-38 is a Zn(2+) binding site. Residues Thr-40 and His-43 each act as charge relay system in the active site. The Zn(2+) site is built by His-63, Glu-64, Cys-93, Cys-96, Cys-99, and Cys-107. Residues Ile-175, Asp-195, Arg-200, 262 to 264 (LGI), and 286 to 287 (IY) contribute to the NAD(+) site.

The protein belongs to the zinc-containing alcohol dehydrogenase family. As to quaternary structure, homotetramer. The cofactor is Zn(2+).

The protein localises to the cytoplasm. It carries out the reaction L-threonine + NAD(+) = (2S)-2-amino-3-oxobutanoate + NADH + H(+). The protein operates within amino-acid degradation; L-threonine degradation via oxydo-reductase pathway; glycine from L-threonine: step 1/2. Catalyzes the NAD(+)-dependent oxidation of L-threonine to 2-amino-3-ketobutyrate. In Shewanella halifaxensis (strain HAW-EB4), this protein is L-threonine 3-dehydrogenase.